The chain runs to 454 residues: 3-phosphoshikimate 1-carboxyvinyltransferase (454 aa).

The 3-phosphoshikimate site is built by K39, S40, and R44. K39 contributes to the phosphoenolpyruvate binding site. Phosphoenolpyruvate is bound by residues G112 and R140. S185, Q187, D333, and K360 together coordinate 3-phosphoshikimate. Position 187 (Q187) interacts with phosphoenolpyruvate. D333 functions as the Proton acceptor in the catalytic mechanism. 2 residues coordinate phosphoenolpyruvate: R364 and R405.

Belongs to the EPSP synthase family. As to quaternary structure, monomer.

It is found in the cytoplasm. It carries out the reaction 3-phosphoshikimate + phosphoenolpyruvate = 5-O-(1-carboxyvinyl)-3-phosphoshikimate + phosphate. It functions in the pathway metabolic intermediate biosynthesis; chorismate biosynthesis; chorismate from D-erythrose 4-phosphate and phosphoenolpyruvate: step 6/7. Its function is as follows. Catalyzes the transfer of the enolpyruvyl moiety of phosphoenolpyruvate (PEP) to the 5-hydroxyl of shikimate-3-phosphate (S3P) to produce enolpyruvyl shikimate-3-phosphate and inorganic phosphate. This is 3-phosphoshikimate 1-carboxyvinyltransferase from Xylella fastidiosa (strain Temecula1 / ATCC 700964).